A 293-amino-acid chain; its full sequence is 4-diphosphocytidyl-2-C-methyl-D-erythritol kinase (293 aa).

Lys-16 is a catalytic residue. 99–109 is an ATP binding site; that stretch reads PMGAGLGGGSS. Asp-141 is an active-site residue.

This sequence belongs to the GHMP kinase family. IspE subfamily.

The catalysed reaction is 4-CDP-2-C-methyl-D-erythritol + ATP = 4-CDP-2-C-methyl-D-erythritol 2-phosphate + ADP + H(+). It participates in isoprenoid biosynthesis; isopentenyl diphosphate biosynthesis via DXP pathway; isopentenyl diphosphate from 1-deoxy-D-xylulose 5-phosphate: step 3/6. Its function is as follows. Catalyzes the phosphorylation of the position 2 hydroxy group of 4-diphosphocytidyl-2C-methyl-D-erythritol. The protein is 4-diphosphocytidyl-2-C-methyl-D-erythritol kinase of Burkholderia thailandensis (strain ATCC 700388 / DSM 13276 / CCUG 48851 / CIP 106301 / E264).